A 240-amino-acid polypeptide reads, in one-letter code: Proteasome subunit alpha (240 aa).

This sequence belongs to the peptidase T1A family. The 20S proteasome core is composed of 14 alpha and 14 beta subunits that assemble into four stacked heptameric rings, resulting in a barrel-shaped structure. The two inner rings, each composed of seven catalytic beta subunits, are sandwiched by two outer rings, each composed of seven alpha subunits. The catalytic chamber with the active sites is on the inside of the barrel. Has a gated structure, the ends of the cylinder being occluded by the N-termini of the alpha-subunits. Is capped at one or both ends by the proteasome regulatory ATPase, PAN.

It is found in the cytoplasm. Its activity is regulated as follows. The formation of the proteasomal ATPase PAN-20S proteasome complex, via the docking of the C-termini of PAN into the intersubunit pockets in the alpha-rings, triggers opening of the gate for substrate entry. Interconversion between the open-gate and close-gate conformations leads to a dynamic regulation of the 20S proteasome proteolysis activity. Its function is as follows. Component of the proteasome core, a large protease complex with broad specificity involved in protein degradation. The chain is Proteasome subunit alpha from Methanoculleus marisnigri (strain ATCC 35101 / DSM 1498 / JR1).